The primary structure comprises 371 residues: S-adenosylmethionine:tRNA ribosyltransferase-isomerase (371 aa).

It belongs to the QueA family. As to quaternary structure, monomer.

Its subcellular location is the cytoplasm. It catalyses the reaction 7-aminomethyl-7-carbaguanosine(34) in tRNA + S-adenosyl-L-methionine = epoxyqueuosine(34) in tRNA + adenine + L-methionine + 2 H(+). Its pathway is tRNA modification; tRNA-queuosine biosynthesis. Functionally, transfers and isomerizes the ribose moiety from AdoMet to the 7-aminomethyl group of 7-deazaguanine (preQ1-tRNA) to give epoxyqueuosine (oQ-tRNA). This Nitratidesulfovibrio vulgaris (strain DP4) (Desulfovibrio vulgaris) protein is S-adenosylmethionine:tRNA ribosyltransferase-isomerase.